Consider the following 432-residue polypeptide: MVGVMMAAAATPGCGVSQALTACGSHEGLRRVAPVFGPGVVSVSAPCKLPRKLNVQAVAEPIAKSSPRTIEECEANVVAGNAPAAPPVPAKPSAPEGTPAISPLVMPARPRRNRRSPALRAAFQETTISPANFILPLFVHEGEQNAPIGAMPGCQRLGWRHGLIDEVYKARDVGVNSVVLFPKVPDALKSSTGDEAYNPDGLVPRCIRLLKDKFPDLVIYTDVALDPYSSDGHDGIVREDGLIMNDETVHQLCKQAVAQAQAGADVVSPSDMMDGRVGAIRKALDLAGHQDVSIMAYTAKYASAFYGPFREALDSNPRFGDKKTYQMNPANYREALIETRMDEAEGADILMVKPAMPYLDVIRLLRDNTALPISAYQVSGEYSMIRAAAAAGMLDEKKAVLESLLSIRRAGADVILTYFAIQAAQWLCAERV.

The interval 84 to 113 (AAPPVPAKPSAPEGTPAISPLVMPARPRRN) is disordered. The active-site Schiff-base intermediate with substrate is the Lys300. 5-aminolevulinate contacts are provided by Arg310 and Lys322. Glu338 contacts Mg(2+). Catalysis depends on Lys353, which acts as the Schiff-base intermediate with substrate. Residues Ser379 and Tyr418 each contribute to the 5-aminolevulinate site.

This sequence belongs to the ALAD family. Homooctamer. The cofactor is Mg(2+).

Its subcellular location is the plastid. It is found in the chloroplast. The catalysed reaction is 2 5-aminolevulinate = porphobilinogen + 2 H2O + H(+). It functions in the pathway porphyrin-containing compound metabolism; protoporphyrin-IX biosynthesis; coproporphyrinogen-III from 5-aminolevulinate: step 1/4. In terms of biological role, catalyzes an early step in the biosynthesis of tetrapyrroles. Binds two molecules of 5-aminolevulinate per subunit, each at a distinct site, and catalyzes their condensation to form porphobilinogen. The polypeptide is Delta-aminolevulinic acid dehydratase, chloroplastic (HEMB) (Physcomitrium patens (Spreading-leaved earth moss)).